The primary structure comprises 410 residues: Peptidase T (410 aa).

Zn(2+) is bound at residue His-78. The active site involves Asp-80. Asp-140 is a Zn(2+) binding site. Glu-173 serves as the catalytic Proton acceptor. The Zn(2+) site is built by Glu-174, Asp-196, and His-379.

This sequence belongs to the peptidase M20B family. Zn(2+) serves as cofactor.

The protein resides in the cytoplasm. It carries out the reaction Release of the N-terminal residue from a tripeptide.. Functionally, cleaves the N-terminal amino acid of tripeptides. In Pectobacterium atrosepticum (strain SCRI 1043 / ATCC BAA-672) (Erwinia carotovora subsp. atroseptica), this protein is Peptidase T.